The primary structure comprises 531 residues: MSTPRPEEHQKFSAAAALCPLSNCQFSGVVISAIADEQKLEFTNKYKGSCTLLCSYDSQGIVLRIVLDADREHVLKEYMIAADTDAAQMGRRSYAVTLESDNLVLRFASDQDQQLFRKVVENVKHLRPKSVFSQRTEESSASQYFQFYGYLSQQQNMMQDYVRTSTYQRAILGNAVDFQDKIVLDVGAGSGILSFFAVQAGAAKVYAIEASNMAQYAQQLVESNNVQHKISVIPGKIEEIELPEKVDVIISEPMGYMLYNERMLETYLHARKWLKPNGKMYPTHGDLHIAPFSDESLYSEQYNKANFWYQSAFHGVDLTTLHKEGMKEYFRQPIVDTFDIRICMAKSVRHVCDFLNDKEDDLHLIDIPLEFQILQTGICHGLAFWFDVEFSGSSQNVWLSTSPTAPLTHWYQVRCLLPMPIFIKQGQTLTGRVLLEANRRQSYDVTIDLHIEGTLISSSNTLDLKNPYFRYTGAPVQAPPGTSTQSPSEQYWTQVDTQGSRNSSSMLNGGLGVNGIGDGSMDITHGLMHPH.

Residues 141–450 (ASQYFQFYGY…QSYDVTIDLH (310 aa)) enclose the SAM-dependent MTase PRMT-type domain. 6 residues coordinate S-adenosyl-L-methionine: Q154, R163, G187, E209, E238, and T266. Asymmetric dimethylarginine; by autocatalysis is present on R501.

Belongs to the class I-like SAM-binding methyltransferase superfamily. Protein arginine N-methyltransferase family. As to quaternary structure, homodimer. Post-translationally, the dimethylated protein is the major form.

The protein resides in the cytoplasm. The protein localises to the nucleus. It catalyses the reaction L-arginyl-[protein] + 2 S-adenosyl-L-methionine = N(omega),N(omega)-dimethyl-L-arginyl-[protein] + 2 S-adenosyl-L-homocysteine + 2 H(+). Functionally, methylates (mono- and asymmetric dimethylation) the guanidino nitrogens of arginyl residues in proteins. May methylate histone H3 at 'Arg-17' and activate transcription via chromatin remodeling. This chain is Histone-arginine methyltransferase CARMER (Art4), found in Drosophila persimilis (Fruit fly).